A 274-amino-acid polypeptide reads, in one-letter code: 3-deoxy-manno-octulosonate cytidylyltransferase (274 aa).

Belongs to the KdsB family.

Its subcellular location is the cytoplasm. The catalysed reaction is 3-deoxy-alpha-D-manno-oct-2-ulosonate + CTP = CMP-3-deoxy-beta-D-manno-octulosonate + diphosphate. Its pathway is nucleotide-sugar biosynthesis; CMP-3-deoxy-D-manno-octulosonate biosynthesis; CMP-3-deoxy-D-manno-octulosonate from 3-deoxy-D-manno-octulosonate and CTP: step 1/1. It functions in the pathway bacterial outer membrane biogenesis; lipopolysaccharide biosynthesis. Activates KDO (a required 8-carbon sugar) for incorporation into bacterial lipopolysaccharide in Gram-negative bacteria. This is 3-deoxy-manno-octulosonate cytidylyltransferase from Bordetella avium (strain 197N).